Reading from the N-terminus, the 559-residue chain is MLISRQERARICSDSELGAGNLLARLKAYGRPLDEPVLRTDGTWRAPDGSRPEVLTLGELYAVVEAYAGWYAAHGVRPRDPVALHSSSSAEFAVNFLALTSLGAIPSFVNGNLAPETAREYVRRQGAVGAFTDESHREVLTDAGLGFHVTADAIRPEHRASLPASYPYRHDPTDPVLISHSSGTTGMPKGVPHTHRTLMYAQVHRLRYSTGTDMERTLVGLPGAHNAMVATLLYCLLLRTDIKLLSSQRGADVLDTVEEFRPTTVLAFAGTFGEMAAEDLTRRDLSSVQVWFNTGDAAHEAHIRALVAHGSHQKVDRDLRRVRVDGSVFVDGLGSSEAGYSVFHNRHTKDTDAYARRIGKPISFAEAAVLSEDGIPLPPGQIGRLGLKSPTLTPGYWNDSLTWNRMRLGGYWLTGDLAHQDEDGNFYHLDRAPDAVRTRAGIVFSTRTEELLLAELPELADCTVVGVAPDGVRADWDGDGEGEAYALLQVTDEGAADAADAAGGDEAWTERVNSVLTAAGYPPVHRALRMKPDDVAKGATGKVLKRVMRDRFAAEEQHA.

Position 181 (Ser181) interacts with Mg(2+). Residues Ala227, Gly332, and Ser336 each coordinate ATP. Position 337 (Glu337) interacts with Mg(2+). ATP is bound by residues Asp416 and Arg437.

It belongs to the ATP-dependent AMP-binding enzyme family. The cofactor is Mg(2+).

It carries out the reaction 3-aminoavenalumate + nitrite + ATP = 3-diazoavenalumate + AMP + diphosphate + H2O. The catalysed reaction is (E)-3-aminocoumarate + nitrite + ATP + H(+) = (E)-3-diazocoumarate + AMP + diphosphate + H2O. It catalyses the reaction 3-amino-4-hydroxybenzoate + nitrite + ATP + H(+) = 3-diazo-4-hydroxybenzoate + AMP + diphosphate + H2O. Its function is as follows. Ligase involved in the biosynthesis of avenalumic acid (AVA). Catalyzes the diazotization of 3-aminoavenalumic acid (3-AAA) to 3-diazoavenalumic acid (3-DAA). It can also act on 3-aminocoumaric acid (3-ACA) and 3-amino-4-hydroxybenzoic acid (3,4-AHBA) with lower activity. The chain is 3-aminoavenalumate diazotase from Streptomyces sp.